A 268-amino-acid chain; its full sequence is Shikimate dehydrogenase (NADP(+)) (268 aa).

Shikimate is bound by residues 13 to 15 and threonine 60; that span reads SLS. The Proton acceptor role is filled by lysine 64. Glutamate 76 provides a ligand contact to NADP(+). Asparagine 85 and aspartate 100 together coordinate shikimate. Residues 124–128, 148–153, and isoleucine 209 contribute to the NADP(+) site; these read GAGGA and NRTMAR. Tyrosine 211 lines the shikimate pocket. Residue glycine 232 coordinates NADP(+).

This sequence belongs to the shikimate dehydrogenase family. In terms of assembly, homodimer.

The catalysed reaction is shikimate + NADP(+) = 3-dehydroshikimate + NADPH + H(+). It functions in the pathway metabolic intermediate biosynthesis; chorismate biosynthesis; chorismate from D-erythrose 4-phosphate and phosphoenolpyruvate: step 4/7. Functionally, involved in the biosynthesis of the chorismate, which leads to the biosynthesis of aromatic amino acids. Catalyzes the reversible NADPH linked reduction of 3-dehydroshikimate (DHSA) to yield shikimate (SA). This Staphylococcus aureus (strain JH1) protein is Shikimate dehydrogenase (NADP(+)).